The following is a 219-amino-acid chain: Protein VERNALIZATION 2 (219 aa).

In terms of domain architecture, CCT spans R138 to V180.

Mainly expressed in leaves, and at low levels in the shoot apical meristem (SAM).

The protein localises to the nucleus. Involved in the regulation of vernalization; this process in essential for flowering in cv. Bd29-1 but seems do not occur in cv. Bd21. The chain is Protein VERNALIZATION 2 from Brachypodium distachyon (Purple false brome).